We begin with the raw amino-acid sequence, 304 residues long: Carnitine monooxygenase reductase subunit (304 aa).

Residues 1–93 (MEQLTPLIKR…SEPKNLFPLA (93 aa)) enclose the FAD-binding FR-type domain. Residues 219-304 (FTVVLAKSNQ…AKGKKLVLDL (86 aa)) form the 2Fe-2S ferredoxin-type domain. [2Fe-2S] cluster is bound by residues Cys-253, Cys-258, Cys-261, and Cys-291.

The protein belongs to the PDR/VanB family. CntB subfamily. As to quaternary structure, composed of an oxygenase subunit and a reductase subunit. It depends on FMN as a cofactor. [2Fe-2S] cluster serves as cofactor.

The catalysed reaction is (R)-carnitine + NADH + O2 + H(+) = (3R)-3-hydroxy-4-oxobutanoate + trimethylamine + NAD(+) + H2O. The enzyme catalyses (R)-carnitine + NADPH + O2 + H(+) = (3R)-3-hydroxy-4-oxobutanoate + trimethylamine + NADP(+) + H2O. It functions in the pathway amine and polyamine metabolism; carnitine metabolism. Inhibited by EDTA. Converts carnitine to trimethylamine and malic semialdehyde. Acts on both enantiomers. The sequence is that of Carnitine monooxygenase reductase subunit from Acinetobacter pittii (strain PHEA-2).